We begin with the raw amino-acid sequence, 387 residues long: Patatin group A-2 (387 aa).

The signal sequence occupies residues 1 to 23; it reads MATTKSFLILIVMILATTSSTFA. One can recognise a PNPLA domain in the interval 32-230; that stretch reads LSIDGGGIKG…TVADPALLSV (199 aa). The GXGXXG signature appears at 36–41; sequence GGGIKG. The GXSXG motif lies at 75–79; that stretch reads GTSTG. The active-site Nucleophile is Ser-77. A glycan (N-linked (GlcNAc...) asparagine) is linked at Asn-115. Catalysis depends on Asp-216, which acts as the Proton acceptor. The DGA/G signature appears at 216–218; it reads DGA. Residues 361-385 are a coiled coil; that stretch reads ETYEEALKRFAKLLSDRKKLRANKA.

Belongs to the patatin family. Tuber and stolon.

The protein localises to the vacuole. Functionally, probable lipolytic acyl hydrolase (LAH), an activity which is thought to be involved in the response of tubers to pathogens. This chain is Patatin group A-2, found in Solanum tuberosum (Potato).